Here is a 179-residue protein sequence, read N- to C-terminus: Large ribosomal subunit protein uL5 (179 aa).

It belongs to the universal ribosomal protein uL5 family. In terms of assembly, part of the 50S ribosomal subunit; part of the 5S rRNA/L5/L18/L25 subcomplex. Contacts the 5S rRNA and the P site tRNA. Forms a bridge to the 30S subunit in the 70S ribosome.

This is one of the proteins that bind and probably mediate the attachment of the 5S RNA into the large ribosomal subunit, where it forms part of the central protuberance. In the 70S ribosome it contacts protein S13 of the 30S subunit (bridge B1b), connecting the 2 subunits; this bridge is implicated in subunit movement. Contacts the P site tRNA; the 5S rRNA and some of its associated proteins might help stabilize positioning of ribosome-bound tRNAs. The polypeptide is Large ribosomal subunit protein uL5 (Rickettsia prowazekii (strain Madrid E)).